We begin with the raw amino-acid sequence, 604 residues long: Putative ankyrin repeat protein L56 (604 aa).

ANK repeat units follow at residues 77–106, 135–164, 166–189, 190–219, 221–247, 248–277, 314–341, 342–371, 380–410, 445–474, 475–504, 505–534, and 535–565; these read IDRY…DILV, FFKS…NADG, LSAC…YDDN, TIYH…EDKR, NVFI…KWKI, DVEF…DSKY, KFSK…NENV, DLRE…EFTD, EHIT…SRSY, YSQA…DIKP, ITNI…DITI, NDNR…DIRT, and DDDY…EPSN.

This chain is Putative ankyrin repeat protein L56, found in Acanthamoeba polyphaga (Amoeba).